The primary structure comprises 740 residues: Rho GTPase-activating protein 92B (740 aa).

One can recognise a BAR domain in the interval 13–246; it reads ENLSRSSKSD…IQDTIQGTEK (234 aa). Residues 49–74 form a disordered region; the sequence is LPALSGGGGSGSGSSEEQDKRTKKNS. Residues 251 to 448 enclose the Rho-GAP domain; the sequence is TSLKEHLTST…LLISQWDYFF (198 aa). Positions 467-740 are disordered; the sequence is GKSKSNSSNE…PPPTNWKSSD (274 aa). Phosphoserine occurs at positions 469 and 473. The span at 506-520 shows a compositional bias: polar residues; it reads TTNGNGIIMTTSQTS. Pro residues predominate over residues 566 to 577; sequence PLPPPPVTPAKP. S593 carries the phosphoserine modification. A Phosphothreonine modification is found at T595. Polar residues predominate over residues 643-655; sequence TTPTQATIDNGNG. A compositionally biased stretch (basic and acidic residues) spans 659–672; it reads FKTEHFLDKLRQEN. Positions 673 to 686 are enriched in polar residues; sequence GETNGTREVSSTTK. The span at 694–713 shows a compositional bias: low complexity; that stretch reads PPATAADQNQQQAQPQVTTP. S715 is subject to Phosphoserine. T721 carries the post-translational modification Phosphothreonine. Residues 725–734 are compositionally biased toward pro residues; the sequence is PTVPAPPPPT. Phosphoserine is present on residues S738 and S739.

GTPase activator for the Rho-type GTPases by converting them to an inactive GDP-bound state. The protein is Rho GTPase-activating protein 92B (RhoGAP92B) of Drosophila melanogaster (Fruit fly).